The following is a 327-amino-acid chain: Methionyl-tRNA formyltransferase (327 aa).

Residue 121-124 (SLLP) participates in (6S)-5,6,7,8-tetrahydrofolate binding.

This sequence belongs to the Fmt family.

The enzyme catalyses L-methionyl-tRNA(fMet) + (6R)-10-formyltetrahydrofolate = N-formyl-L-methionyl-tRNA(fMet) + (6S)-5,6,7,8-tetrahydrofolate + H(+). Functionally, attaches a formyl group to the free amino group of methionyl-tRNA(fMet). The formyl group appears to play a dual role in the initiator identity of N-formylmethionyl-tRNA by promoting its recognition by IF2 and preventing the misappropriation of this tRNA by the elongation apparatus. This is Methionyl-tRNA formyltransferase from Burkholderia ambifaria (strain MC40-6).